The primary structure comprises 350 residues: Protein RecA (350 aa).

67–74 (GPESSGKT) contacts ATP.

It belongs to the RecA family.

The protein resides in the cytoplasm. Its function is as follows. Can catalyze the hydrolysis of ATP in the presence of single-stranded DNA, the ATP-dependent uptake of single-stranded DNA by duplex DNA, and the ATP-dependent hybridization of homologous single-stranded DNAs. It interacts with LexA causing its activation and leading to its autocatalytic cleavage. The polypeptide is Protein RecA (Chromobacterium violaceum (strain ATCC 12472 / DSM 30191 / JCM 1249 / CCUG 213 / NBRC 12614 / NCIMB 9131 / NCTC 9757 / MK)).